Consider the following 450-residue polypeptide: Interferon regulatory factor 4 (450 aa).

Positions 21–129 (NGKLRQWLID…DPYKVYRIVP (109 aa)) form a DNA-binding region, IRF tryptophan pentad repeat. 2 positions are modified to phosphoserine; by ROCK2: S446 and S447.

This sequence belongs to the IRF family. Interacts with SPIB and DEF6. Interacts with the BATF-JUNB heterodimer. Interacts with BATF (via bZIP domain); the interaction is direct. Directly interacts with NLRP3 in the nucleus of Th2 cells; this interaction enhances IRF4 ability to bind to the IL4 promoter and is required for optimal IRF4-dependent IL4 transcription. Interacts with SPI1. Post-translationally, phosphorylation by ROCK2 regulates IL-17 and IL-21 production. Lymphoid cells.

It is found in the nucleus. Its subcellular location is the cytoplasm. Transcriptional activator. Binds to the interferon-stimulated response element (ISRE) of the MHC class I promoter. Binds the immunoglobulin lambda light chain enhancer, together with PU.1. Probably plays a role in ISRE-targeted signal transduction mechanisms specific to lymphoid cells. Involved in CD8(+) dendritic cell differentiation by forming a complex with the BATF-JUNB heterodimer in immune cells, leading to recognition of AICE sequence (5'-TGAnTCA/GAAA-3'), an immune-specific regulatory element, followed by cooperative binding of BATF and IRF4 and activation of genes. The polypeptide is Interferon regulatory factor 4 (Mus musculus (Mouse)).